We begin with the raw amino-acid sequence, 155 residues long: Snaclec bothrojaracin subunit alpha (155 aa).

Residues 1–23 (MGRFLFVSFGLLVVFLSLSGTAA) form the signal peptide. 3 disulfide bridges follow: cysteine 25–cysteine 36, cysteine 53–cysteine 150, and cysteine 125–cysteine 142. The C-type lectin domain occupies 32–151 (HEGHCYKFFQ…CGQQNPFVCK (120 aa)).

Belongs to the snaclec family. As to quaternary structure, heterodimer of subunits alpha and beta; disulfide-linked. Expressed by the venom gland.

It is found in the secreted. Functionally, this potent antithrombotic agent acts in a calcium-independent manner. Exerts its anticoagulant effect by two distinct mechanisms. It binds to activated thrombin through exosite 1, blocking fibrinogen clotting, platelet activation, factor V activation and other effects, and it interacts with prothrombin (F2), decreasing its proteolytic activation -especially in the presence of factor Va. In vivo, intravenous injection before thrombosis induction causes a significant decrease in thrombus weight. Furthermore, BJC shows a prolonged effect by remaining in the plasma bound to prothrombin for at least 12 hours. This Bothrops jararaca (Jararaca) protein is Snaclec bothrojaracin subunit alpha.